A 167-amino-acid chain; its full sequence is Ribosome maturation factor RimM (167 aa).

The PRC barrel domain maps to glutamate 94–leucine 165.

This sequence belongs to the RimM family. As to quaternary structure, binds ribosomal protein uS19.

Its subcellular location is the cytoplasm. An accessory protein needed during the final step in the assembly of 30S ribosomal subunit, possibly for assembly of the head region. Essential for efficient processing of 16S rRNA. May be needed both before and after RbfA during the maturation of 16S rRNA. It has affinity for free ribosomal 30S subunits but not for 70S ribosomes. This is Ribosome maturation factor RimM from Staphylococcus aureus (strain bovine RF122 / ET3-1).